The following is a 236-amino-acid chain: Phosphoribosylaminoimidazole-succinocarboxamide synthase (236 aa).

This sequence belongs to the SAICAR synthetase family.

It carries out the reaction 5-amino-1-(5-phospho-D-ribosyl)imidazole-4-carboxylate + L-aspartate + ATP = (2S)-2-[5-amino-1-(5-phospho-beta-D-ribosyl)imidazole-4-carboxamido]succinate + ADP + phosphate + 2 H(+). The protein operates within purine metabolism; IMP biosynthesis via de novo pathway; 5-amino-1-(5-phospho-D-ribosyl)imidazole-4-carboxamide from 5-amino-1-(5-phospho-D-ribosyl)imidazole-4-carboxylate: step 1/2. This is Phosphoribosylaminoimidazole-succinocarboxamide synthase from Rickettsia canadensis (strain McKiel).